A 175-amino-acid polypeptide reads, in one-letter code: CDP-archaeol synthase (175 aa).

4 helical membrane passes run 41–61 (GLFSGIFCGFLAGCVEVWLSF), 82–102 (LIVVLALASGALFGDMFKSFF), 122–142 (FVVGAWVFTYLAAPEWFVSNF), and 150–170 (VIIITPLLHLTTNIIGYFIGV).

The protein belongs to the CDP-archaeol synthase family. The cofactor is Mg(2+).

It localises to the cell membrane. The catalysed reaction is 2,3-bis-O-(geranylgeranyl)-sn-glycerol 1-phosphate + CTP + H(+) = CDP-2,3-bis-O-(geranylgeranyl)-sn-glycerol + diphosphate. It functions in the pathway membrane lipid metabolism; glycerophospholipid metabolism. Its function is as follows. Catalyzes the formation of CDP-2,3-bis-(O-geranylgeranyl)-sn-glycerol (CDP-archaeol) from 2,3-bis-(O-geranylgeranyl)-sn-glycerol 1-phosphate (DGGGP) and CTP. This reaction is the third ether-bond-formation step in the biosynthesis of archaeal membrane lipids. The chain is CDP-archaeol synthase from Methanosarcina mazei (strain ATCC BAA-159 / DSM 3647 / Goe1 / Go1 / JCM 11833 / OCM 88) (Methanosarcina frisia).